Reading from the N-terminus, the 24-residue chain is uncharacterized protein (24 aa).

This is an uncharacterized protein from Saccharomyces cerevisiae (strain ATCC 204508 / S288c) (Baker's yeast).